A 98-amino-acid chain; its full sequence is MSAHQVKLTPKDILEKEFKVSIRGYNQDEVDQFLDLIIKDYEAFQQEIDELRQENARLKRQVEELQKRPAMSAGTTNYDILQRLSNLEKHVFGRKLYE.

Residues 34–71 (LDLIIKDYEAFQQEIDELRQENARLKRQVEELQKRPAM) are a coiled coil.

It belongs to the GpsB family. Forms polymers through the coiled coil domains. Interacts with PBP1, MreC and EzrA.

It localises to the cytoplasm. In terms of biological role, divisome component that associates with the complex late in its assembly, after the Z-ring is formed, and is dependent on DivIC and PBP2B for its recruitment to the divisome. Together with EzrA, is a key component of the system that regulates PBP1 localization during cell cycle progression. Its main role could be the removal of PBP1 from the cell pole after pole maturation is completed. Also contributes to the recruitment of PBP1 to the division complex. Not essential for septum formation. The protein is Cell cycle protein GpsB of Geobacillus kaustophilus (strain HTA426).